A 220-amino-acid polypeptide reads, in one-letter code: Large ribosomal subunit protein uL3 (220 aa).

Belongs to the universal ribosomal protein uL3 family. In terms of assembly, part of the 50S ribosomal subunit. Forms a cluster with proteins L14 and L19.

Its function is as follows. One of the primary rRNA binding proteins, it binds directly near the 3'-end of the 23S rRNA, where it nucleates assembly of the 50S subunit. The sequence is that of Large ribosomal subunit protein uL3 from Staphylococcus carnosus (strain TM300).